The primary structure comprises 154 residues: Lipoprotein signal peptidase (154 aa).

A run of 2 helical transmembrane segments spans residues 52-72 (ILAG…IGIV) and 85-105 (LGVA…DRAV). Catalysis depends on residues Asp111 and Asp129. Residues 124 to 144 (IFNIADSSLCVGVMLLFIQML) form a helical membrane-spanning segment.

It belongs to the peptidase A8 family.

It localises to the cell membrane. It catalyses the reaction Release of signal peptides from bacterial membrane prolipoproteins. Hydrolyzes -Xaa-Yaa-Zaa-|-(S,diacylglyceryl)Cys-, in which Xaa is hydrophobic (preferably Leu), and Yaa (Ala or Ser) and Zaa (Gly or Ala) have small, neutral side chains.. It participates in protein modification; lipoprotein biosynthesis (signal peptide cleavage). In terms of biological role, this protein specifically catalyzes the removal of signal peptides from prolipoproteins. In Bacillus subtilis (strain 168), this protein is Lipoprotein signal peptidase.